A 203-amino-acid polypeptide reads, in one-letter code: Probable flagellin 1 (203 aa).

A propeptide spanning residues 1-11 is cleaved from the precursor; sequence MGMRFLKNEKG.

It belongs to the archaeal flagellin family.

The protein resides in the archaeal flagellum. Its function is as follows. Flagellin is the subunit protein which polymerizes to form the filaments of archaeal flagella. The protein is Probable flagellin 1 (flaB1) of Archaeoglobus fulgidus (strain ATCC 49558 / DSM 4304 / JCM 9628 / NBRC 100126 / VC-16).